The chain runs to 207 residues: Hemin/hemoglobin-binding protein 1 (207 aa).

The first 27 residues, 1–27 (MKKVLVFAAFIVLFSFSFLSTGLTAQA), serve as a signal peptide directing secretion. An NEAT domain is found at 29 to 148 (LKDGTYSVDY…RFDEGSAKAL (120 aa)). The segment at 151 to 178 (AVKSSDNNTTTPATKSDSSNKVTNPKSS) is disordered. Over residues 154–178 (SSDNNTTTPATKSDSSNKVTNPKSS) the composition is skewed to polar residues. Positions 174–178 (NPKSS) match the NPKXZ sorting signal motif. Serine 177 is subject to Murein peptidoglycan amidated serine. Positions 178-207 (SDSSQMFLYGIIFVATGAGLILLKRRAIFK) are cleaved as a propeptide — removed by sortase B.

It is found in the secreted. The protein localises to the cell wall. Binds both host hemin and hemoglobin with affinity in the nanomolar range and presumably directs it to membrane transporters. In Listeria monocytogenes serovar 1/2a (strain ATCC BAA-679 / EGD-e), this protein is Hemin/hemoglobin-binding protein 1.